The chain runs to 272 residues: Cytochrome b-c1 complex subunit Rieske, mitochondrial (272 aa).

At 77 to 104 the chain is on the mitochondrial matrix side; that stretch reads VHNDVTVPDFSAYRREDVMDATTSSQTS. A helical membrane pass occupies residues 105 to 138; sequence SEDRKGFSYLVTATACVATAYAAKNVVTQFISSL. Residues 139 to 272 lie on the Mitochondrial intermembrane side of the membrane; the sequence is SASADVLALS…FVGDDLVVVG (134 aa). The 86-residue stretch at 185-270 folds into the Rieske domain; that stretch reads EAEVDVSKLR…YQFVGDDLVV (86 aa). 6 residues coordinate [2Fe-2S] cluster: Cys-215, His-217, Leu-218, Cys-234, His-237, and Ser-239. A disulfide bridge links Cys-220 with Cys-236.

The protein belongs to the Rieske iron-sulfur protein family. In terms of assembly, component of the ubiquinol-cytochrome c oxidoreductase (cytochrome b-c1 complex, complex III, CIII), a multisubunit enzyme composed of 11 subunits. The complex is composed of 3 respiratory subunits cytochrome b, cytochrome c1 and Rieske protein UQCRFS1, 2 core protein subunits UQCRC1/QCR1 and UQCRC2/QCR2, and 6 low-molecular weight protein subunits UQCRH/QCR6, UQCRB/QCR7, UQCRQ/QCR8, UQCR10/QCR9, UQCR11/QCR10 and subunit 9, the cleavage product of Rieske protein UQCRFS1. The complex exists as an obligatory dimer and forms supercomplexes (SCs) in the inner mitochondrial membrane with NADH-ubiquinone oxidoreductase (complex I, CI) and cytochrome c oxidase (complex IV, CIV), resulting in different assemblies (supercomplex SCI(1)III(2)IV(1) and megacomplex MCI(2)III(2)IV(2)). Incorporation of the Rieske protein UQCRFS1 is the penultimate step in complex III assembly. Interacts with TTC19, which is involved in the clearance of UQCRFS1 fragments. As to quaternary structure, component of the ubiquinol-cytochrome c oxidoreductase (cytochrome b-c1 complex, complex III, CIII). Subunit 9 corresponds to the mitochondrial targeting sequence (MTS) of Rieske protein UQCRFS1. It is retained after processing and incorporated inside complex III, where it remains bound to the complex and localizes between the 2 core subunits UQCRC1/QCR1 and UQCRC2/QCR2. Requires [2Fe-2S] cluster as cofactor. In terms of processing, proteolytic processing is necessary for the correct insertion of UQCRFS1 in the complex III dimer. Several fragments are generated during UQCRFS1 insertion, most probably due to the endogenous matrix-processing peptidase (MPP) activity of the 2 core protein subunits UQCRC1/QCR1 and UQCRC2/QCR2, which are homologous to the 2 mitochondrial-processing peptidase (MPP) subunits beta-MPP and alpha-MPP respectively. The action of the protease is also necessary for the clearance of the UQCRFS1 fragments.

It localises to the mitochondrion inner membrane. It catalyses the reaction a quinol + 2 Fe(III)-[cytochrome c](out) = a quinone + 2 Fe(II)-[cytochrome c](out) + 2 H(+)(out). In terms of biological role, component of the ubiquinol-cytochrome c oxidoreductase, a multisubunit transmembrane complex that is part of the mitochondrial electron transport chain which drives oxidative phosphorylation. The respiratory chain contains 3 multisubunit complexes succinate dehydrogenase (complex II, CII), ubiquinol-cytochrome c oxidoreductase (cytochrome b-c1 complex, complex III, CIII) and cytochrome c oxidase (complex IV, CIV), that cooperate to transfer electrons derived from NADH and succinate to molecular oxygen, creating an electrochemical gradient over the inner membrane that drives transmembrane transport and the ATP synthase. The cytochrome b-c1 complex catalyzes electron transfer from ubiquinol to cytochrome c, linking this redox reaction to translocation of protons across the mitochondrial inner membrane, with protons being carried across the membrane as hydrogens on the quinol. In the process called Q cycle, 2 protons are consumed from the matrix, 4 protons are released into the intermembrane space and 2 electrons are passed to cytochrome c. The Rieske protein is a catalytic core subunit containing a [2Fe-2S] iron-sulfur cluster. It cycles between 2 conformational states during catalysis to transfer electrons from the quinol bound in the Q(0) site in cytochrome b to cytochrome c1. Incorporation of UQCRFS1 is the penultimate step in complex III assembly. Functionally, component of the ubiquinol-cytochrome c oxidoreductase (cytochrome b-c1 complex, complex III, CIII). UQCRFS1 undergoes proteolytic processing once it is incorporated in the complex III dimer. One of the fragments, called subunit 9, corresponds to its mitochondrial targeting sequence (MTS). The proteolytic processing is necessary for the correct insertion of UQCRFS1 in the complex III dimer, but the persistence of UQCRFS1-derived fragments may prevent newly imported UQCRFS1 to be processed and assembled into complex III and is detrimental for the complex III structure and function. The polypeptide is Cytochrome b-c1 complex subunit Rieske, mitochondrial (UQCRFS1) (Gallus gallus (Chicken)).